Consider the following 162-residue polypeptide: tRNA (cytidine(34)-2'-O)-methyltransferase (162 aa).

S-adenosyl-L-methionine is bound by residues L80, G102, L124, and S132.

Belongs to the class IV-like SAM-binding methyltransferase superfamily. RNA methyltransferase TrmH family. TrmL subfamily. Homodimer.

It is found in the cytoplasm. The enzyme catalyses cytidine(34) in tRNA + S-adenosyl-L-methionine = 2'-O-methylcytidine(34) in tRNA + S-adenosyl-L-homocysteine + H(+). It carries out the reaction 5-carboxymethylaminomethyluridine(34) in tRNA(Leu) + S-adenosyl-L-methionine = 5-carboxymethylaminomethyl-2'-O-methyluridine(34) in tRNA(Leu) + S-adenosyl-L-homocysteine + H(+). Functionally, methylates the ribose at the nucleotide 34 wobble position in the two leucyl isoacceptors tRNA(Leu)(CmAA) and tRNA(Leu)(cmnm5UmAA). Catalyzes the methyl transfer from S-adenosyl-L-methionine to the 2'-OH of the wobble nucleotide. The protein is tRNA (cytidine(34)-2'-O)-methyltransferase of Acidovorax sp. (strain JS42).